The primary structure comprises 488 residues: Signal recognition particle receptor FtsY (488 aa).

Residues 14-82 (DTAPEDVSKP…AVPDDAVHGG (69 aa)) are disordered. Residues 32–67 (VGTSSTGSPVGTGAAMPAAQDAPSPAAPHAIATPDD) are compositionally biased toward low complexity. Residues 287–294 (GVNGVGKT), 369–373 (DTAGR), and 433–436 (TKLD) each bind GTP.

The protein belongs to the GTP-binding SRP family. FtsY subfamily. Part of the signal recognition particle protein translocation system, which is composed of SRP and FtsY. SRP is a ribonucleoprotein composed of Ffh and a 4.5S RNA molecule.

Its subcellular location is the cell inner membrane. It is found in the cytoplasm. It carries out the reaction GTP + H2O = GDP + phosphate + H(+). Functionally, involved in targeting and insertion of nascent membrane proteins into the cytoplasmic membrane. Acts as a receptor for the complex formed by the signal recognition particle (SRP) and the ribosome-nascent chain (RNC). Interaction with SRP-RNC leads to the transfer of the RNC complex to the Sec translocase for insertion into the membrane, the hydrolysis of GTP by both Ffh and FtsY, and the dissociation of the SRP-FtsY complex into the individual components. The polypeptide is Signal recognition particle receptor FtsY (Nitratidesulfovibrio vulgaris (strain ATCC 29579 / DSM 644 / CCUG 34227 / NCIMB 8303 / VKM B-1760 / Hildenborough) (Desulfovibrio vulgaris)).